The following is a 209-amino-acid chain: Large ribosomal subunit protein uL4 (209 aa).

The segment at 50-78 is disordered; that stretch reads STLKKGEVSGGGKKPYQQKHTGRARQGSI.

This sequence belongs to the universal ribosomal protein uL4 family. As to quaternary structure, part of the 50S ribosomal subunit.

In terms of biological role, one of the primary rRNA binding proteins, this protein initially binds near the 5'-end of the 23S rRNA. It is important during the early stages of 50S assembly. It makes multiple contacts with different domains of the 23S rRNA in the assembled 50S subunit and ribosome. Functionally, forms part of the polypeptide exit tunnel. This is Large ribosomal subunit protein uL4 from Mycoplasmoides gallisepticum (strain R(low / passage 15 / clone 2)) (Mycoplasma gallisepticum).